The primary structure comprises 330 residues: Stomatin-1 (330 aa).

The segment covering 1 to 19 (MQPSETVEMQEMAQPSGQQ) has biased composition (polar residues). Residues 1 to 27 (MQPSETVEMQEMAQPSGQQRDVEARVQ) are disordered. The chain crosses the membrane as a helical span at residues 42–62 (MFCIAMSYVLIFLTFPVSVFM).

This sequence belongs to the band 7/mec-2 family.

The protein resides in the membrane. The polypeptide is Stomatin-1 (sto-1) (Caenorhabditis elegans).